Consider the following 145-residue polypeptide: L-alanine exporter AlaE (145 aa).

The next 4 membrane-spanning stretches (helical) occupy residues 16 to 36, 42 to 62, 86 to 106, and 111 to 131; these read FALV…LSGM, LSSR…YGLY, LFAY…VIGA, and ILTA…TYGY.

The protein belongs to the AlaE exporter family.

The protein resides in the cell inner membrane. Its function is as follows. Exports L-alanine. The sequence is that of L-alanine exporter AlaE from Pectobacterium parmentieri (strain WPP163) (Pectobacterium wasabiae (strain WPP163)).